A 473-amino-acid chain; its full sequence is Aspartyl/glutamyl-tRNA(Asn/Gln) amidotransferase subunit B (473 aa).

The protein belongs to the GatB/GatE family. GatB subfamily. As to quaternary structure, heterotrimer of A, B and C subunits.

The catalysed reaction is L-glutamyl-tRNA(Gln) + L-glutamine + ATP + H2O = L-glutaminyl-tRNA(Gln) + L-glutamate + ADP + phosphate + H(+). The enzyme catalyses L-aspartyl-tRNA(Asn) + L-glutamine + ATP + H2O = L-asparaginyl-tRNA(Asn) + L-glutamate + ADP + phosphate + 2 H(+). Allows the formation of correctly charged Asn-tRNA(Asn) or Gln-tRNA(Gln) through the transamidation of misacylated Asp-tRNA(Asn) or Glu-tRNA(Gln) in organisms which lack either or both of asparaginyl-tRNA or glutaminyl-tRNA synthetases. The reaction takes place in the presence of glutamine and ATP through an activated phospho-Asp-tRNA(Asn) or phospho-Glu-tRNA(Gln). This chain is Aspartyl/glutamyl-tRNA(Asn/Gln) amidotransferase subunit B, found in Wolbachia sp. subsp. Drosophila simulans (strain wRi).